We begin with the raw amino-acid sequence, 367 residues long: GTPase Obg (367 aa).

The Obg domain occupies 1 to 158 (MFIDNVELTV…VQIRLELKLI (158 aa)). The 200-residue stretch at 159-358 (ADVGLVGFPN…LKYALYDLVK (200 aa)) folds into the OBG-type G domain. Residues 165–172 (GFPNVGKS), 190–194 (FTTLT), 212–215 (DIPG), 280–283 (TKID), and 339–341 (SAV) contribute to the GTP site. Residues serine 172 and threonine 192 each coordinate Mg(2+).

The protein belongs to the TRAFAC class OBG-HflX-like GTPase superfamily. OBG GTPase family. As to quaternary structure, monomer. The cofactor is Mg(2+).

It localises to the cytoplasm. Its function is as follows. An essential GTPase which binds GTP, GDP and possibly (p)ppGpp with moderate affinity, with high nucleotide exchange rates and a fairly low GTP hydrolysis rate. Plays a role in control of the cell cycle, stress response, ribosome biogenesis and in those bacteria that undergo differentiation, in morphogenesis control. In Nitratiruptor sp. (strain SB155-2), this protein is GTPase Obg.